The primary structure comprises 736 residues: Phosphoribosylformylglycinamidine synthase subunit PurL (736 aa).

His50 is a catalytic residue. Residues Tyr53 and Lys92 each coordinate ATP. Glu94 contributes to the Mg(2+) binding site. Residues 95–98 and Arg117 contribute to the substrate site; that span reads SHNH. His96 functions as the Proton acceptor in the catalytic mechanism. Asp118 is a binding site for Mg(2+). Gln241 provides a ligand contact to substrate. Residue Asp269 participates in Mg(2+) binding. 313–315 contributes to the substrate binding site; that stretch reads ESQ. Residues Asp495 and Gly532 each coordinate ATP. Asn533 provides a ligand contact to Mg(2+). Substrate is bound at residue Ser535.

This sequence belongs to the FGAMS family. As to quaternary structure, monomer. Part of the FGAM synthase complex composed of 1 PurL, 1 PurQ and 2 PurS subunits.

The protein localises to the cytoplasm. The enzyme catalyses N(2)-formyl-N(1)-(5-phospho-beta-D-ribosyl)glycinamide + L-glutamine + ATP + H2O = 2-formamido-N(1)-(5-O-phospho-beta-D-ribosyl)acetamidine + L-glutamate + ADP + phosphate + H(+). Its pathway is purine metabolism; IMP biosynthesis via de novo pathway; 5-amino-1-(5-phospho-D-ribosyl)imidazole from N(2)-formyl-N(1)-(5-phospho-D-ribosyl)glycinamide: step 1/2. Functionally, part of the phosphoribosylformylglycinamidine synthase complex involved in the purines biosynthetic pathway. Catalyzes the ATP-dependent conversion of formylglycinamide ribonucleotide (FGAR) and glutamine to yield formylglycinamidine ribonucleotide (FGAM) and glutamate. The FGAM synthase complex is composed of three subunits. PurQ produces an ammonia molecule by converting glutamine to glutamate. PurL transfers the ammonia molecule to FGAR to form FGAM in an ATP-dependent manner. PurS interacts with PurQ and PurL and is thought to assist in the transfer of the ammonia molecule from PurQ to PurL. This is Phosphoribosylformylglycinamidine synthase subunit PurL from Bartonella tribocorum (strain CIP 105476 / IBS 506).